The following is a 130-amino-acid chain: Osteocrin (130 aa).

A signal peptide spans 1–25 (MLDWRLASTHFILAMIVMLWGSGKA). Arg129 is modified (arginine amide).

The protein belongs to the Osteocrin family. Interacts with NPR3. Expressed in skeletal muscle and to a much lesser extent in bone, brown adipose tissue, spleen and testis. Not expressed in neurons.

The protein resides in the secreted. Functionally, hormone that acts as a ligand for natriuretic peptide receptor NPR3/NPR-C and promotes bone growth and physical endurance in muscle. Acts as a regulator of osteoblast differentiation and bone growth by binding to natriuretic peptide receptor NPR3/NPR-C, thereby preventing binding between NPR3/NPR-C and natriuretic peptides, leading to increase cGMP production. Required to enhance physical endurance: induced following physical exercise in muscle and promotes cGMP production, probably by interacting with NPR3/NPR-C. May act as an autocrine and paracrine factor linked to glucose metabolism in skeletal muscle. The sequence is that of Osteocrin from Mus musculus (Mouse).